A 1253-amino-acid polypeptide reads, in one-letter code: Latent-transforming growth factor beta-binding protein 3 (1253 aa).

The signal sequence occupies residues 1 to 38 (MPGPRGAAHGLAPAMRQAGALGLLALLLLALLGPGGGA). An N-linked (GlcNAc...) asparagine glycan is attached at N86. Residues 106–138 (RVVVCPLPCMNGGQCSSRNQCLCPPDFTGRFCQ) enclose the EGF-like 1 domain. 3 cysteine pairs are disulfide-bonded: C110–C120, C114–C126, and C128–C137. A disordered region spans residues 244–270 (GPNAEGPASSQHLLPHPKPQHPRPPTQ). The TB 1 domain maps to 274–328 (GRCFQDTLPKQPCGSNPLPGLTKQEDCCGSIGTAWGQSKCHKCPQLQYTGVQKPG). Disulfide bonds link C276-C300, C286-C313, and C301-C316. The N-linked (GlcNAc...) asparagine glycan is linked to N346. The 41-residue stretch at 352-392 (DINECAMPGMCRHGDCLNNPGSYRCVCPPGHSLGPSRTQCI) folds into the EGF-like 2; calcium-binding domain. 7 disulfides stabilise this stretch: C356-C367, C362-C376, C378-C391, C402-C425, C412-C437, C426-C440, and C427-C452. Residues 400–452 (SLCFRLVSTEHQCQHPLTTRLTRQLCCCSVGKAWGARCQRCPADGTAAFKEIC) form the TB 2 domain. Residues 475 to 555 (FSLFLHPDGP…PTFHRFLPDL (81 aa)) are disordered. Positions 571–612 (ETDECRLNQNICGHGQCVPGPSDYSCHCNAGYRSHPQHRYCV) constitute an EGF-like 3 domain. 32 disulfide bridges follow: C575-C587, C582-C596, C598-C611, C617-C629, C622-C638, C661-C673, C667-C682, C684-C698, C745-C756, C751-C765, C767-C780, C786-C797, C792-C806, C808-C821, C827-C838, C833-C847, C849-C861, C867-C880, C874-C889, C891-C904, C916-C939, C926-C951, C940-C956, C941-C968, C994-C1007, C1002-C1016, C1018-C1031, C1037-C1048, C1043-C1057, C1059-C1072, C1113-C1127, and C1114-C1136. An EGF-like 4; calcium-binding domain is found at 613 to 656 (DVNECEAEPCGPGKGICMNTGGSYNCHCNRGYRLHVGAGGRSCV). The EGF-like 5; calcium-binding domain occupies 657–699 (DLNECTKPHLCGDGGFCINFPGHYKCNCYPGYRLKASRPPICE). Positions 741 to 781 (DVNECSEGTPCSPGWCENLPGSYRCTCAQGYEPAQDGLSCI) constitute an EGF-like 6; calcium-binding domain. The EGF-like 7; calcium-binding domain maps to 782–822 (DVDECEAGKVCQDGICTNTPGSFQCQCLSGYHLSRDRSRCE). In terms of domain architecture, EGF-like 8; calcium-binding spans 823 to 861 (DIDECDFPAACIGGDCINTNGSYRCLCPQGHRLVGGRKC). N-linked (GlcNAc...) asparagine glycosylation is present at N842. Residues 863–905 (DIDECSQDPGLCLPHGACENLQGSYVCVCDEGFTLTQDQHGCE) form the EGF-like 9; calcium-binding domain. The region spanning 914–968 (KECYLNFDDTVFCDSVLATNVTQQECCCSLGAGWGDHCEIYPCPVYSSAEFHSLC) is the TB 3 domain. N933 carries an N-linked (GlcNAc...) asparagine glycan. Residues 990–1032 (DIDECILFGAEICKEGKCVNTQPGYECYCKQGFYYDGNLLECV) enclose the EGF-like 10; calcium-binding domain. Positions 1033–1072 (DVDECLDESNCRNGVCENTRGGYRCACTPPAEYSPAQRQC) constitute an EGF-like 11; calcium-binding domain. Residues 1086–1136 (EVCWGQRGEDGMCMGPLAGPALTFDDCCCRQGRGWGTQCRPCPPRGTGSQC) enclose the TB 4 domain. Residues 1138-1148 (TSQSESNSFWD) show a composition bias toward polar residues. The segment at 1138–1169 (TSQSESNSFWDTSPLLLGKSPRDEDSSEEDSD) is disordered. The 28-residue stretch at 1204 to 1231 (DIDECRELNQRGLLCKSERCVNTSGSFR) folds into the EGF-like 12; calcium-binding domain. Disulfide bonds link C1208/C1223 and C1218/C1232. N-linked (GlcNAc...) asparagine glycosylation occurs at N1225.

This sequence belongs to the LTBP family. In terms of assembly, forms part of the large latent transforming growth factor beta (TGFB1) precursor complex; removal is essential for activation of complex. Interacts with EFEMP2. Contains hydroxylated asparagine residues. Post-translationally, two intrachain disulfide bonds from the TB3 domain are rearranged upon TGFB1 binding, and form interchain bonds with TGFB1 propeptide, anchoring it to the extracellular matrix.

Its subcellular location is the secreted. The protein resides in the extracellular space. It is found in the extracellular matrix. Its function is as follows. Key regulator of transforming growth factor beta (TGFB1, TGFB2 and TGFB3) that controls TGF-beta activation by maintaining it in a latent state during storage in extracellular space. Associates specifically via disulfide bonds with the Latency-associated peptide (LAP), which is the regulatory chain of TGF-beta, and regulates integrin-dependent activation of TGF-beta. This Mus musculus (Mouse) protein is Latent-transforming growth factor beta-binding protein 3 (Ltbp3).